Reading from the N-terminus, the 255-residue chain is Acetylglutamate kinase (255 aa).

Substrate contacts are provided by residues 40–41 (GG), Arg62, and Asn153.

Belongs to the acetylglutamate kinase family. ArgB subfamily.

It localises to the cytoplasm. It catalyses the reaction N-acetyl-L-glutamate + ATP = N-acetyl-L-glutamyl 5-phosphate + ADP. The protein operates within amino-acid biosynthesis; L-arginine biosynthesis; N(2)-acetyl-L-ornithine from L-glutamate: step 2/4. Functionally, catalyzes the ATP-dependent phosphorylation of N-acetyl-L-glutamate. This chain is Acetylglutamate kinase, found in Bacillus cereus (strain ATCC 10987 / NRS 248).